The primary structure comprises 965 residues: UvrABC system protein A (965 aa).

An ATP-binding site is contributed by 32–39 (GLSGSGKS). Residues 254–281 (CPVCDYSLPELEPRLFSFNAPMGACPAC) form a C4-type zinc finger. ABC transporter domains follow at residues 311 to 588 (WDRR…PRSL) and 608 to 937 (PNAT…HFLA). 641–648 (GVSGSGKS) is a binding site for ATP. The C4-type zinc finger occupies 740–766 (CEACEGDGLIKVEMHFLPDVYVPCDVC).

Belongs to the ABC transporter superfamily. UvrA family. Forms a heterotetramer with UvrB during the search for lesions.

The protein localises to the cytoplasm. The UvrABC repair system catalyzes the recognition and processing of DNA lesions. UvrA is an ATPase and a DNA-binding protein. A damage recognition complex composed of 2 UvrA and 2 UvrB subunits scans DNA for abnormalities. When the presence of a lesion has been verified by UvrB, the UvrA molecules dissociate. The sequence is that of UvrABC system protein A from Xylella fastidiosa (strain 9a5c).